Reading from the N-terminus, the 649-residue chain is Sulfate transporter 1.1 (649 aa).

Residues 1-20 (MSGTINPPDGGGSGARNPPV) are disordered. Residues 1-86 (MSGTINPPDG…AREYTLRKFR (86 aa)) lie on the Cytoplasmic side of the membrane. Residues 87 to 107 (GDLIAGLTIASLCIPQDIGYA) traverse the membrane as a helical segment. The Extracellular portion of the chain corresponds to 108–111 (KLAN). A helical membrane pass occupies residues 112 to 132 (VDPKYGLYSSFVPPLIYAGMG). The Cytoplasmic segment spans residues 133-136 (SSRD). A helical transmembrane segment spans residues 137-157 (IAIGPVAVVSLLVGTLCQAVI). Over 158 to 168 (DPKKNPEDYLR) the chain is Extracellular. 2 helical membrane-spanning segments follow: residues 169-189 (LVFT…FLRL) and 190-210 (GFLI…GAAI). The Extracellular segment spans residues 211–248 (TIALQQLKGFLGIKTFTKKTDIVSVMHSVFKNAEHGWN). The helical transmembrane segment at 249-269 (WQTIVIGASFLTFLLVTKFIG) threads the bilayer. Residues 270-275 (KRNRKL) are Cytoplasmic-facing. The helical transmembrane segment at 276-296 (FWVPAIAPLISVIISTFFVFI) threads the bilayer. Over 297 to 334 (FRADKQGVQIVKHIDQGINPISVHKIFFSGKYFTEGIR) the chain is Extracellular. The helical transmembrane segment at 335–355 (IGGIAGMVALTEAVAIARTFA) threads the bilayer. Residues 356–367 (AMKDYQIDGNKE) lie on the Cytoplasmic side of the membrane. A helical membrane pass occupies residues 368-388 (MIALGTMNVVGSMTSCYIATG). Topologically, residues 389 to 404 (SFSRSAVNFMAGVETA) are extracellular. A helical transmembrane segment spans residues 405–425 (VSNIVMAIVVALTLEFITPLF). Topologically, residues 426–431 (KYTPNA) are cytoplasmic. A helical membrane pass occupies residues 432-452 (ILAAIIISAVLGLIDIDAAIL). The Extracellular segment spans residues 453 to 465 (IWRIDKLDFLACM). Residues 466–486 (GAFLGVIFISVEIGLLIAVVI) form a helical membrane-spanning segment. Residues 487 to 649 (SFAKILLQVT…CSTEVAEQQT (163 aa)) are Cytoplasmic-facing. An STAS domain is found at 517–640 (QYPDAAQIPG…LTVGDAVAVC (124 aa)).

Belongs to the SLC26A/SulP transporter (TC 2.A.53) family. As to quaternary structure, interacts with OASA1 through its STAS domain. Expressed in lateral root cap, root hairs, epidermal and cortical cells of roots.

The protein resides in the membrane. High-affinity H(+)/sulfate cotransporter that mediates the uptake of the environmental sulfate by plant roots under low-sulfur conditions. Plays a central role in the regulation of sulfate assimilation. This is Sulfate transporter 1.1 (SULTR1;1) from Arabidopsis thaliana (Mouse-ear cress).